The chain runs to 549 residues: Eukaryotic translation initiation factor 3 subunit D-2 (549 aa).

Residues 107-157 form a disordered region; it reads ARVKGRSGRGPGMLGVAGSMAGGGTTSGSTKYGKGRESRRNQGRRFARNAP. Over residues 114–132 the composition is skewed to gly residues; the sequence is GRGPGMLGVAGSMAGGGTT. Residues 288-302 are RNA gate; it reads QFDLLTVNETSLEPP. The interval 527-549 is disordered; it reads NSFDSDAEDEENSSEPFANSLDN. A compositionally biased stretch (acidic residues) spans 529–539; that stretch reads FDSDAEDEENS.

Belongs to the eIF-3 subunit D family. As to quaternary structure, component of the eukaryotic translation initiation factor 3 (eIF-3) complex. The eIF-3 complex interacts with pix.

The protein resides in the cytoplasm. MRNA cap-binding component of the eukaryotic translation initiation factor 3 (eIF-3) complex, which is involved in protein synthesis of a specialized repertoire of mRNAs and, together with other initiation factors, stimulates binding of mRNA and methionyl-tRNAi to the 40S ribosome. The eIF-3 complex specifically targets and initiates translation of a subset of mRNAs involved in cell proliferation. In the eIF-3 complex, eif3d specifically recognizes and binds the 7-methylguanosine cap of a subset of mRNAs. The chain is Eukaryotic translation initiation factor 3 subunit D-2 from Drosophila ananassae (Fruit fly).